The primary structure comprises 713 residues: Phenylalanine--tRNA ligase beta subunit (713 aa).

The 115-residue stretch at 39–153 (IRHVENIKYG…EANLNEDPIA (115 aa)) folds into the tRNA-binding domain. The region spanning 379-454 (LKPKEILFDH…RFYGYDNFPI (76 aa)) is the B5 domain. Positions 432, 438, 441, and 442 each coordinate Mg(2+).

It belongs to the phenylalanyl-tRNA synthetase beta subunit family. Type 1 subfamily. Tetramer of two alpha and two beta subunits. Mg(2+) is required as a cofactor.

It is found in the cytoplasm. It carries out the reaction tRNA(Phe) + L-phenylalanine + ATP = L-phenylalanyl-tRNA(Phe) + AMP + diphosphate + H(+). This is Phenylalanine--tRNA ligase beta subunit from Mycoplasma mobile (strain ATCC 43663 / 163K / NCTC 11711) (Mesomycoplasma mobile).